The sequence spans 109 residues: Putative pterin-4-alpha-carbinolamine dehydratase (109 aa).

The protein belongs to the pterin-4-alpha-carbinolamine dehydratase family.

It carries out the reaction (4aS,6R)-4a-hydroxy-L-erythro-5,6,7,8-tetrahydrobiopterin = (6R)-L-erythro-6,7-dihydrobiopterin + H2O. This chain is Putative pterin-4-alpha-carbinolamine dehydratase, found in Halorhodospira halophila (strain DSM 244 / SL1) (Ectothiorhodospira halophila (strain DSM 244 / SL1)).